The sequence spans 232 residues: Protein FAM246B (232 aa).

Basic and acidic residues predominate over residues 19–31; that stretch reads EVLRRVTGRRRDP. 4 disordered regions span residues 19 to 47, 80 to 101, 151 to 179, and 191 to 232; these read EVLRRVTGRRRDPGPQSNGPGREDARAPG, AAGAGERTGAHSRGSVCSVCGE, ALLPPPPPSPPARREPRAVPRAAPRGPTL, and AASR…GGGD. Positions 211 to 220 are enriched in basic residues; the sequence is APARKNHKKM.

It belongs to the FAM246 family.

The polypeptide is Protein FAM246B (Homo sapiens (Human)).